Consider the following 396-residue polypeptide: Acetate kinase (396 aa).

Residue Asn-7 participates in Mg(2+) binding. Lys-14 lines the ATP pocket. Arg-91 provides a ligand contact to substrate. The active-site Proton donor/acceptor is the Asp-148. Residues 208 to 212 (HLGNG), 283 to 285 (DFR), and 331 to 335 (GLGEN) each bind ATP. Residue Glu-384 coordinates Mg(2+).

This sequence belongs to the acetokinase family. Homodimer. Requires Mg(2+) as cofactor. Mn(2+) serves as cofactor.

Its subcellular location is the cytoplasm. The catalysed reaction is acetate + ATP = acetyl phosphate + ADP. It functions in the pathway metabolic intermediate biosynthesis; acetyl-CoA biosynthesis; acetyl-CoA from acetate: step 1/2. Its function is as follows. Catalyzes the formation of acetyl phosphate from acetate and ATP. Can also catalyze the reverse reaction. The sequence is that of Acetate kinase from Alkaliphilus metalliredigens (strain QYMF).